We begin with the raw amino-acid sequence, 600 residues long: Elongation factor 4 (600 aa).

The region spanning 5–187 is the tr-type G domain; sequence KYIRNFSIIA…AIINKLPSPK (183 aa). GTP-binding positions include 17–22 and 134–137; these read DHGKST and NKID.

It belongs to the TRAFAC class translation factor GTPase superfamily. Classic translation factor GTPase family. LepA subfamily.

Its subcellular location is the cell inner membrane. It carries out the reaction GTP + H2O = GDP + phosphate + H(+). Required for accurate and efficient protein synthesis under certain stress conditions. May act as a fidelity factor of the translation reaction, by catalyzing a one-codon backward translocation of tRNAs on improperly translocated ribosomes. Back-translocation proceeds from a post-translocation (POST) complex to a pre-translocation (PRE) complex, thus giving elongation factor G a second chance to translocate the tRNAs correctly. Binds to ribosomes in a GTP-dependent manner. The polypeptide is Elongation factor 4 (Rickettsia typhi (strain ATCC VR-144 / Wilmington)).